Reading from the N-terminus, the 291-residue chain is Orotidine 5'-phosphate decarboxylase (291 aa).

The active-site Proton donor is Lys-97.

This sequence belongs to the OMP decarboxylase family. Type 2 subfamily.

The catalysed reaction is orotidine 5'-phosphate + H(+) = UMP + CO2. Its pathway is pyrimidine metabolism; UMP biosynthesis via de novo pathway; UMP from orotate: step 2/2. The protein is Orotidine 5'-phosphate decarboxylase of Clostridium kluyveri (strain ATCC 8527 / DSM 555 / NBRC 12016 / NCIMB 10680 / K1).